Consider the following 474-residue polypeptide: Aspartyl/glutamyl-tRNA(Asn/Gln) amidotransferase subunit B (474 aa).

The protein belongs to the GatB/GatE family. GatB subfamily. In terms of assembly, heterotrimer of A, B and C subunits.

The enzyme catalyses L-glutamyl-tRNA(Gln) + L-glutamine + ATP + H2O = L-glutaminyl-tRNA(Gln) + L-glutamate + ADP + phosphate + H(+). It catalyses the reaction L-aspartyl-tRNA(Asn) + L-glutamine + ATP + H2O = L-asparaginyl-tRNA(Asn) + L-glutamate + ADP + phosphate + 2 H(+). Allows the formation of correctly charged Asn-tRNA(Asn) or Gln-tRNA(Gln) through the transamidation of misacylated Asp-tRNA(Asn) or Glu-tRNA(Gln) in organisms which lack either or both of asparaginyl-tRNA or glutaminyl-tRNA synthetases. The reaction takes place in the presence of glutamine and ATP through an activated phospho-Asp-tRNA(Asn) or phospho-Glu-tRNA(Gln). The chain is Aspartyl/glutamyl-tRNA(Asn/Gln) amidotransferase subunit B from Persephonella marina (strain DSM 14350 / EX-H1).